The sequence spans 775 residues: MEKFGMNFGGGPSKKDLLETIETQKKQLLQYQARLKDVVRAYKSLLKEKEALEASIKVLSVSHEADVGLAGVQLPGLTFPDSVDDRCSTHSEDSTGTATSLDTAASLTSTKGEFGVEDDRPARGPPPPKSEEASWSESGVSSSSGDGPFAGGEVDKRLHQLKTQLATLTSSLATVTQEKSRMEASYLADKKKMKQDLEDASNKAEEERARLEGELKGLQEQIAETKARLITQQHDRAQEQSDHALMLRELQKLLQEERTQRQDLELRLEETREALAGRAYAAEQMEGFELQTKQLTREVEELKSELQAIRDEKNQPDPRLQELQEEAARLKSHFQAQLQQEMRKTALAEDQLRQQSQVEEQRVAALENQISEVSELLGTYEKAKQKDQLAIQKLKERILQLDLENKTLALAASSRSPLDSHGEESSLDVNVLKDKMEKLKRLLQVAARKSQVTLDVEKLCDLEIMPSSEAADGEKATALYYQQELKQLKEEFERYKMRAQVVLKSKNTKDGNLGKELEAAQEQLAELKEKYISLRLSCEELEHQHQQEADDWKQELARLQQLHRQELERCQLDFRDRTLKLEEELHKQRDRALAVLTEKDLELEQLRSVALASGLPGRRSPVGGGGPGDPADTSSSDSLTQALQLAAANEPTFFLYAEQLARKEVEITSLRKQKHRLEVEVHQLQDRLLEEGERHREEVAALQSHIEKNIRDQSREGANLEYLKNIIYRFLTLPDSLGRQQTLTAILTILHFSPEEKQVIMRLPTSASWWPSGKR.

The stretch at 13–61 forms a coiled coil; sequence SKKDLLETIETQKKQLLQYQARLKDVVRAYKSLLKEKEALEASIKVLSV. Residues 84 to 93 are compositionally biased toward basic and acidic residues; it reads DDRCSTHSED. Disordered stretches follow at residues 84–153 and 614–639; these read DDRC…AGGE and GLPGRRSPVGGGGPGDPADTSSSDSL. Low complexity-rich tracts occupy residues 94–110, 133–147, and 629–638; these read STGTATSLDTAASLTST, ASWSESGVSSSSGDG, and DPADTSSSDS. Residues 153–763 adopt a coiled-coil conformation; that stretch reads EVDKRLHQLK…PEEKQVIMRL (611 aa). A GRIP domain is found at 713–763; the sequence is QSREGANLEYLKNIIYRFLTLPDSLGRQQTLTAILTILHFSPEEKQVIMRL.

Its subcellular location is the cytoplasm. It is found in the golgi apparatus membrane. Its function is as follows. Probably involved in maintaining Golgi structure. In Homo sapiens (Human), this protein is GRIP and coiled-coil domain-containing protein 1 (GCC1).